The primary structure comprises 197 residues: Putative ankyrin repeat protein R875 (197 aa).

4 ANK repeats span residues 78-106, 107-136, 138-166, and 168-196; these read LNKC…DIRE, NDDC…DIRA, DDDA…NFRK, and NDYE…VLHE.

This is Putative ankyrin repeat protein R875 from Acanthamoeba polyphaga mimivirus (APMV).